The following is a 219-amino-acid chain: MRRHPSHSPYRGGCEVRPKRRGLMLAHSSSESPPESLPDAWTVLKTRTAVRNYAKEPVDDALIEQLLEAMLAAPTASNRQAWSFMVVRRPAAVRRLRAFSPGVLGTPAFFVVACVDRSLTDNLSPKLSQKIYDTSKLCVAMAVENLLLAAHAAGLGGCPVGSFRSDIVTSMLGIPEHIEPMLVVPIGRPATALVPSQRRAKNEVVNYESWGNRAAAPTA.

This sequence belongs to the nitroreductase family. In terms of assembly, homomer. FMN is required as a cofactor. Post-translationally, the N-terminus is blocked.

It is found in the cytoplasm. The enzyme catalyses cyclo(L-phenylalanyl-L-leucyl) + 2 O2 = albonoursin + 2 H2O2. Its function is as follows. Involved in the biosynthesis of albonoursin (cyclo[(alpha,beta-dehydro-Phe)-(alpha,beta-dehydro-Leu)]), an antibacterial peptide. Catalyzes the formation of alpha,beta-dehydro-Phe (DPhe) and alpha,beta-dehydro-Leu (DLeu) residues during the biosynthesis of albonoursin. The catalytic reaction of cyclo(L-Phe-L-Leu) occurs in a two-step sequential alpha-beta-dehydrogenation leading first to cyclo(alpha,beta-dehydro-Phe-L-Leu) and finally to albonoursin. Can also use cyclo(L-Phe-L-His), cyclo(L-Trp-L-Trp), cyclo(L-Leu-L-Ala), cyclo(L-Phe-Gly), cyclo(L-Leu-Gly), cyclo(L-Ser-Gly) and cyclo(L-Glu-Gly) as substrate suggesting that the diketopiperazine ring is essential for the enzymatic reaction. The protein is Albonoursin synthase (albA) of Streptomyces noursei (Streptomyces albulus).